We begin with the raw amino-acid sequence, 574 residues long: Man(5)GlcNAc(2)-PP-dolichol translocation protein RFT1 (574 aa).

The Lumenal segment spans residues 1 to 24 (MAKKNSQLPSTSEQILERSTTGAT). Residues 25–45 (FLMMGQLFTKLVTFILNNLLI) traverse the membrane as a helical segment. At 46–48 (RFL) the chain is on the cytoplasmic side. The helical transmembrane segment at 49-69 (SPRIFGITAFLEFIQGTVLFF) threads the bilayer. Over 70 to 110 (SRDAIRLSTLRISDSGNGIIDDDDEEEYQETHYKSKVLQTA) the chain is Lumenal. Residues 111–131 (VNFAYIPFWIGFPLSIGLIAW) form a helical membrane-spanning segment. Topologically, residues 132–148 (QYRNINAYFITLPFFRW) are cytoplasmic. A helical membrane pass occupies residues 149–169 (SIFLIWLSIIVELLSEPFFIV). Topologically, residues 170 to 181 (NQFMLNYAARSR) are lumenal. A helical transmembrane segment spans residues 182-202 (FESIAVTTGCIVNFIVVYAVQ). Residues 203 to 218 (QSRYPMGVVTSDIDKE) are Cytoplasmic-facing. The helical transmembrane segment at 219–239 (GIAILAFALGKLAHSITLLAC) threads the bilayer. At 240-319 (YYWDYLKNFK…INSLCTVEEQ (80 aa)) the chain is on the lumenal side. Residues 320–340 (GIYALLSNYGSLLTRLLFAPI) traverse the membrane as a helical segment. At 341–372 (EESLRLFLARLLSSHNPKNLKLSIEVLVNLTR) the chain is on the cytoplasmic side. A helical membrane pass occupies residues 373 to 393 (FYIYLSLMIIVFGPANSSFLL). At 394–413 (QFLIGSKWSTTSVLDTIRVY) the chain is on the lumenal side. Residues 414 to 434 (CFYIPFLSLNGIFEAFFQSVA) traverse the membrane as a helical segment. Residues 435-443 (TGDQILKHS) lie on the Cytoplasmic side of the membrane. Residues 444-464 (YFMMAFSGIFLLNSWLLIEKL) form a helical membrane-spanning segment. The Lumenal portion of the chain corresponds to 465-469 (KLSIE). A helical membrane pass occupies residues 470–490 (GLILSNIINMVLRILYCGVFL). Topologically, residues 491–509 (NKFHRELFTDSSFFFNFKD) are cytoplasmic. The helical transmembrane segment at 510–530 (FKTVIIAGSTICLLDWWFIGY) threads the bilayer. Residues 531–532 (VK) lie on the Lumenal side of the membrane. A helical membrane pass occupies residues 533-553 (NLQQFVVNVLFAMGLLALILV). Residues 554-574 (KERQTIQSFINKRAVSNSKDV) are Cytoplasmic-facing.

This sequence belongs to the RFT1 family.

Its subcellular location is the endoplasmic reticulum membrane. The protein operates within protein modification; protein glycosylation. Intramembrane glycolipid transporter that operates in the biosynthetic pathway of dolichol-linked oligosaccharides, the glycan precursors employed in protein asparagine (N)-glycosylation. The sequential addition of sugars to dolichol pyrophosphate produces dolichol-linked oligosaccharides containing fourteen sugars, including two GlcNAcs, nine mannoses and three glucoses. Once assembled, the oligosaccharide is transferred from the lipid to nascent proteins by oligosaccharyltransferases. The assembly of dolichol-linked oligosaccharides begins on the cytosolic side of the endoplasmic reticulum membrane and finishes in its lumen. RFT1 could mediate the translocation of the cytosolically oriented intermediate DolPP-GlcNAc2Man5, produced by ALG11, into the ER lumen where dolichol-linked oligosaccharides assembly continues. However, the intramembrane lipid transporter activity could not be confirmed in vitro. This chain is Man(5)GlcNAc(2)-PP-dolichol translocation protein RFT1, found in Saccharomyces cerevisiae (strain ATCC 204508 / S288c) (Baker's yeast).